Reading from the N-terminus, the 200-residue chain is Regulator of G-protein signaling 16 (200 aa).

Residues Cys2 and Cys12 are each lipidated (S-palmitoyl cysteine). The RGS domain occupies 65-181 (SFDLLLSSKN…LKSPAYRDLA (117 aa)). Residues Tyr168 and Tyr177 each carry the phosphotyrosine modification.

Interacts with GNAI1 and GNAQ. Interacts with GNAI3, GNAI3 and GNAO1. In terms of assembly, (Microbial infection) Interacts with porcine circovirus 2 ORF3 protein. Palmitoylated on Cys-2 and/or Cys-12. Post-translationally, phosphorylated. Phosphorylation at Tyr-168 by EGFR enhances GTPase accelerating (GAP) activity toward GNAI1.

It localises to the membrane. In terms of biological role, regulates G protein-coupled receptor signaling cascades. Inhibits signal transduction by increasing the GTPase activity of G protein alpha subunits, thereby driving them into their inactive GDP-bound form. Plays an important role in the phototransduction cascade by regulating the lifetime and effective concentration of activated transducin alpha. May regulate extra and intracellular mitogenic signals. Functionally, (Microbial infection) Gets inactivated and/or degraded by porcine circovirus 2 ORF3 protein, leading to enhanced expression of IL-6 and IL-8 in infected lymphocytes. This would explain chronic inflammatory response of PCV2 infected pigs. In Sus scrofa (Pig), this protein is Regulator of G-protein signaling 16 (RGS16).